Here is a 242-residue protein sequence, read N- to C-terminus: Small ribosomal subunit protein uS2 (242 aa).

This sequence belongs to the universal ribosomal protein uS2 family.

This chain is Small ribosomal subunit protein uS2, found in Vibrio parahaemolyticus serotype O3:K6 (strain RIMD 2210633).